We begin with the raw amino-acid sequence, 238 residues long: Large ribosomal subunit protein uL2 (238 aa).

Residues 203-223 (GGGAWKHPGKPTTVSRNAPPG) are disordered.

The protein belongs to the universal ribosomal protein uL2 family. Part of the 50S ribosomal subunit. Forms a bridge to the 30S subunit in the 70S ribosome.

One of the primary rRNA binding proteins. Required for association of the 30S and 50S subunits to form the 70S ribosome, for tRNA binding and peptide bond formation. It has been suggested to have peptidyltransferase activity; this is somewhat controversial. Makes several contacts with the 16S rRNA in the 70S ribosome. This Methanosarcina barkeri (strain Fusaro / DSM 804) protein is Large ribosomal subunit protein uL2.